Consider the following 165-residue polypeptide: MRWKKLLFWGSALLSVGADQLTKFWVTQNFELRRPPAQPDTWPLIQNVFHFTYVTNDGAAFSLFKDSPLLPWLSFLVCLGLIGLGLFGPRFPQWEQAGYGFLLGGAAGNGIDRIFLGEVIDFLDFRLIQFPVFNIADISINVGLACLIFATWQSSRKGSRKTPTP.

The next 2 helical transmembrane spans lie at 68–88 (PLLPWLSFLVCLGLIGLGLFG) and 100–120 (GFLLGGAAGNGIDRIFLGEVI). Catalysis depends on residues aspartate 121 and aspartate 137. The helical transmembrane segment at 130–150 (FPVFNIADISINVGLACLIFA) threads the bilayer.

The protein belongs to the peptidase A8 family.

It is found in the cell inner membrane. The catalysed reaction is Release of signal peptides from bacterial membrane prolipoproteins. Hydrolyzes -Xaa-Yaa-Zaa-|-(S,diacylglyceryl)Cys-, in which Xaa is hydrophobic (preferably Leu), and Yaa (Ala or Ser) and Zaa (Gly or Ala) have small, neutral side chains.. Its pathway is protein modification; lipoprotein biosynthesis (signal peptide cleavage). In terms of biological role, this protein specifically catalyzes the removal of signal peptides from prolipoproteins. The sequence is that of Lipoprotein signal peptidase from Acaryochloris marina (strain MBIC 11017).